The chain runs to 530 residues: T-complex protein 1 subunit zeta (530 aa).

Gly-38 contacts ADP. Position 38 (Gly-38) interacts with ATP. Residue Asp-89 participates in Mg(2+) binding. ADP contacts are provided by Gly-90, Thr-91, Thr-92, Ser-93, Thr-157, Lys-158, and Ala-410. Residues Gly-90, Thr-91, and Thr-92 each coordinate ATP. Positions 410, 411, 495, and 500 each coordinate ATP. Asp-495 is an ADP binding site.

Component of the chaperonin-containing T-complex (TRiC), a hexadecamer composed of two identical back-to-back stacked rings enclosing a protein folding chamber. Each ring is made up of eight different subunits: TCP1/CCT1, CCT2, CCT3, CCT4, CCT5, CCT6A/CCT6, CCT7, CCT8. Interacts with PACRG.

It localises to the cytoplasm. It carries out the reaction ATP + H2O = ADP + phosphate + H(+). Functionally, component of the chaperonin-containing T-complex (TRiC), a molecular chaperone complex that assists the folding of actin, tubulin and other proteins upon ATP hydrolysis. The polypeptide is T-complex protein 1 subunit zeta (Gallus gallus (Chicken)).